A 356-amino-acid polypeptide reads, in one-letter code: MPVQPSPVVMGIETSCDETGVALVRDGVLLGDALSTSMDQHARYGGVVPEIAARAHVQALVPCVRAALASAGLTAADIGAVAVTAGPGLATALHVGVSAAKAYATALDVPFYGVHHLAGHLAADLVDGEPLPDPLIALIVSGGHTSLLRVGDLARDPIVHLGDTLDDAAGECFDKVARVLGLPYPGGPAVDREAVGNDPAALAFPRPLTGRTDSPYTFSFSGLKTAVARWVEAHPDSTVPAGDVIASFQEAVVDVLTAKAIRACRDHEIGDLLIVGGVAANSRLRALAAQRCEAAGLRLRIPARKRCTDNGVMIAALGDLLVRSGAAPSRPDLAAMPGAFLDQAQLGVVQPTQRAA.

The Fe cation site is built by histidine 116 and histidine 120. Substrate is bound by residues 139–143, aspartate 174, glycine 187, aspartate 191, and asparagine 281; that span reads IVSGG. Aspartate 309 serves as a coordination point for Fe cation.

This sequence belongs to the KAE1 / TsaD family. Fe(2+) is required as a cofactor.

The protein resides in the cytoplasm. It carries out the reaction L-threonylcarbamoyladenylate + adenosine(37) in tRNA = N(6)-L-threonylcarbamoyladenosine(37) in tRNA + AMP + H(+). In terms of biological role, required for the formation of a threonylcarbamoyl group on adenosine at position 37 (t(6)A37) in tRNAs that read codons beginning with adenine. Is involved in the transfer of the threonylcarbamoyl moiety of threonylcarbamoyl-AMP (TC-AMP) to the N6 group of A37, together with TsaE and TsaB. TsaD likely plays a direct catalytic role in this reaction. The polypeptide is tRNA N6-adenosine threonylcarbamoyltransferase (Frankia alni (strain DSM 45986 / CECT 9034 / ACN14a)).